We begin with the raw amino-acid sequence, 1121 residues long: Myelin transcription factor 1 (1121 aa).

2 disordered regions span residues 1–156 (MSLE…SKGS) and 200–376 (EAAE…MTRG). The segment at 21 to 64 (PETTAADLSCPTPGCTGSGHVRGKYSRHRSLQSCPLAKKRKLEG) adopts a CCHHC-type 1 zinc-finger fold. Zn(2+) contacts are provided by cysteine 30, cysteine 35, histidine 48, and cysteine 54. Residues 41–50 (VRGKYSRHRS) show a composition bias toward basic residues. Basic and acidic residues-rich tracts occupy residues 62 to 71 (LEGAEAEHLV) and 123 to 132 (DEIHRPETAE). The segment covering 147–156 (GSATASSKGS) has biased composition (low complexity). Acidic residues predominate over residues 258–308 (EEEDEEEEEEEEEEEEDEEEEEEEEEEEEEEEEEEEEEEEEEEEEEEEEAA). Over residues 346–358 (VRSDDDKDEDTHS) the composition is skewed to basic and acidic residues. CCHHC-type zinc fingers lie at residues 433 to 476 (SRAE…PPEI) and 477 to 520 (LAMH…KLAK). Zn(2+)-binding residues include cysteine 442, cysteine 447, histidine 460, cysteine 466, cysteine 486, cysteine 491, histidine 504, and cysteine 510. Disordered stretches follow at residues 517–540 (KLAKSHEKQQPQTGDPSKSSSNSD) and 668–774 (TLDL…EERK). A compositionally biased stretch (polar residues) spans 526-540 (QPQTGDPSKSSSNSD). Positions 705–723 (SSTSAPSSSMTSPQSSQAS) are enriched in low complexity. Positions 724-733 (RQDEWDRPLD) are enriched in basic and acidic residues. The segment covering 759–770 (EADDQEVSEENF) has biased composition (acidic residues). 4 consecutive CCHHC-type zinc fingers follow at residues 791–834 (KDIK…LRNL), 835–878 (MAAH…GVKV), 884–927 (DKED…QKEG), and 937–980 (KSLK…GKKG). Residues cysteine 800, cysteine 805, histidine 818, cysteine 824, cysteine 844, cysteine 849, histidine 862, cysteine 868, cysteine 893, cysteine 898, histidine 911, cysteine 917, cysteine 946, cysteine 951, histidine 964, and cysteine 970 each contribute to the Zn(2+) site.

The protein belongs to the MYT1 family. As to quaternary structure, interacts with STEAP3. As to expression, mostly in developing nervous system. Expressed in neural progenitors and oligodendrocyte lineage cells. More highly expressed in oligodendrocyte progenitors than in differentiated oligodendrocytes.

The protein localises to the nucleus. Its function is as follows. Binds to the promoter region of genes encoding proteolipid proteins of the central nervous system. May play a role in the development of neurons and oligodendroglia in the CNS. May regulate a critical transition point in oligodendrocyte lineage development by modulating oligodendrocyte progenitor proliferation relative to terminal differentiation and up-regulation of myelin gene transcription. The polypeptide is Myelin transcription factor 1 (MYT1) (Homo sapiens (Human)).